The primary structure comprises 377 residues: Floricaula/leafy homolog (377 aa).

The span at 116-126 (RRRLDEEDPRR) shows a compositional bias: basic and acidic residues. The segment at 116–190 (RRRLDEEDPR…RKKGQRKVVD (75 aa)) is disordered. A compositionally biased stretch (polar residues) spans 131–141 (SGDNNTNTLDA). DNA-binding regions lie at residues 206–210 (REHPF), 275–282 (NKPKMRHY), and 346–349 (YVPT).

This sequence belongs to the FLO/LFY family. In terms of tissue distribution, in developing inflorescences, leaf primordia and very young leaves.

Its subcellular location is the nucleus. Functionally, probable transcription factor. This Populus trichocarpa (Western balsam poplar) protein is Floricaula/leafy homolog (FL).